The following is a 628-amino-acid chain: Alpha-L-arabinofuranosidase A (628 aa).

Positions 1–25 (MVAFSALSGVSALSLLLCLVQHAHG) are cleaved as a signal peptide. 8 N-linked (GlcNAc...) asparagine glycosylation sites follow: asparagine 36, asparagine 51, asparagine 74, asparagine 152, asparagine 171, asparagine 260, asparagine 359, and asparagine 493.

The protein belongs to the glycosyl hydrolase 51 family.

It localises to the secreted. It carries out the reaction Hydrolysis of terminal non-reducing alpha-L-arabinofuranoside residues in alpha-L-arabinosides.. The protein operates within glycan metabolism; L-arabinan degradation. Functionally, alpha-L-arabinofuranosidase involved in the degradation of arabinoxylan, a major component of plant hemicellulose. Acts only on small linear 1,5-alpha-linked L-arabinofuranosyl oligosaccharides. The protein is Alpha-L-arabinofuranosidase A (abfA) of Aspergillus kawachii (strain NBRC 4308) (White koji mold).